We begin with the raw amino-acid sequence, 1621 residues long: Ferredoxin-dependent glutamate synthase, chloroplastic (1621 aa).

A chloroplast-targeting transit peptide spans 1 to 57 (MALQSAPKLLYSSPSPSVFSANERRVAFSDFVGLSKKRSRRRRIAGTFRNFPALSAV). Cys105 (nucleophile) is an active-site residue. Positions 105–504 (CGVGFIANLD…PGMMISVDLS (400 aa)) constitute a Glutamine amidotransferase type-2 domain. 1183–1240 (LSETHQTLISNGLRERVILRVDGGLKCGVDVMMAAAMGADEYGFGSLAMIATGCVMAR) contacts FMN. The [3Fe-4S] cluster site is built by Cys1236, Cys1242, and Cys1247.

It belongs to the glutamate synthase family. Interacts with ferredoxin. Interacts (via FMN-binding domain) with SQD1. The cofactor is [3Fe-4S] cluster. Requires FMN as cofactor. As to expression, expressed in young leaves. Not detected in mature leaves.

The protein localises to the plastid. Its subcellular location is the chloroplast stroma. The enzyme catalyses 2 oxidized [2Fe-2S]-[ferredoxin] + 2 L-glutamate = L-glutamine + 2 reduced [2Fe-2S]-[ferredoxin] + 2-oxoglutarate + 2 H(+). It participates in amino-acid biosynthesis; L-glutamate biosynthesis via GLT pathway; L-glutamate from 2-oxoglutarate and L-glutamine (ferredoxin route): step 1/1. The protein operates within energy metabolism; nitrogen metabolism. With respect to regulation, inhibited by N-bromosuccinimide, which is specific for modification of tryptophan residues probably involved in the electron transfer from ferredoxin. Its function is as follows. Catalyzes the reductive conversion of 2-oxoglutarate plus glutamine to two molecules of glutamate, using reduced ferredoxin as the electron donor. Contains one FMN but no FAD. The FMN-binding domain is also involved in the delivery of sulfite to the reaction center of SQD1. The sequence is that of Ferredoxin-dependent glutamate synthase, chloroplastic from Spinacia oleracea (Spinach).